The sequence spans 412 residues: Imidazolonepropionase (412 aa).

Residues histidine 73 and histidine 75 each contribute to the Fe(3+) site. Zn(2+) contacts are provided by histidine 73 and histidine 75. 3 residues coordinate 4-imidazolone-5-propanoate: arginine 82, tyrosine 145, and histidine 178. Position 145 (tyrosine 145) interacts with N-formimidoyl-L-glutamate. Histidine 247 contacts Fe(3+). Histidine 247 provides a ligand contact to Zn(2+). Glutamine 250 lines the 4-imidazolone-5-propanoate pocket. Fe(3+) is bound at residue aspartate 322. Aspartate 322 is a Zn(2+) binding site. Residues asparagine 324 and glycine 326 each coordinate N-formimidoyl-L-glutamate. Serine 327 serves as a coordination point for 4-imidazolone-5-propanoate.

It belongs to the metallo-dependent hydrolases superfamily. HutI family. It depends on Zn(2+) as a cofactor. Requires Fe(3+) as cofactor.

The protein resides in the cytoplasm. The catalysed reaction is 4-imidazolone-5-propanoate + H2O = N-formimidoyl-L-glutamate. The protein operates within amino-acid degradation; L-histidine degradation into L-glutamate; N-formimidoyl-L-glutamate from L-histidine: step 3/3. Functionally, catalyzes the hydrolytic cleavage of the carbon-nitrogen bond in imidazolone-5-propanoate to yield N-formimidoyl-L-glutamate. It is the third step in the universal histidine degradation pathway. The sequence is that of Imidazolonepropionase from Shewanella amazonensis (strain ATCC BAA-1098 / SB2B).